A 324-amino-acid polypeptide reads, in one-letter code: Biotin synthase (324 aa).

Positions 37–264 (NEVQVAALMN…ASYVRLAAGR (228 aa)) constitute a Radical SAM core domain. [4Fe-4S] cluster contacts are provided by C52, C56, and C59. Positions 96, 127, 187, and 259 each coordinate [2Fe-2S] cluster.

This sequence belongs to the radical SAM superfamily. Biotin synthase family. In terms of assembly, homodimer. [4Fe-4S] cluster serves as cofactor. It depends on [2Fe-2S] cluster as a cofactor.

It catalyses the reaction (4R,5S)-dethiobiotin + (sulfur carrier)-SH + 2 reduced [2Fe-2S]-[ferredoxin] + 2 S-adenosyl-L-methionine = (sulfur carrier)-H + biotin + 2 5'-deoxyadenosine + 2 L-methionine + 2 oxidized [2Fe-2S]-[ferredoxin]. It functions in the pathway cofactor biosynthesis; biotin biosynthesis; biotin from 7,8-diaminononanoate: step 2/2. In terms of biological role, catalyzes the conversion of dethiobiotin (DTB) to biotin by the insertion of a sulfur atom into dethiobiotin via a radical-based mechanism. The protein is Biotin synthase of Anaplasma marginale (strain Florida).